The primary structure comprises 479 residues: Probable periplasmic serine endoprotease DegP-like (479 aa).

Positions 1-27 are cleaved as a signal peptide; sequence MSIPRMKSYFSLIAAVLMLGQVATAQA. The tract at residues 77–99 is disordered; it reads LERSMPPGSRPPGAGKGDRQRET. Active-site charge relay system residues include His119, Asp149, and Ser222. Substrate-binding positions include 220-222 and 277-281; these read GNS and LGVVI. 2 consecutive PDZ domains span residues 266 to 357 and 363 to 468; these read LKAS…IRDG and TVTV…LRQG.

It belongs to the peptidase S1C family.

It is found in the periplasm. It carries out the reaction Acts on substrates that are at least partially unfolded. The cleavage site P1 residue is normally between a pair of hydrophobic residues, such as Val-|-Val.. Its function is as follows. Might be efficient in the degradation of transiently denatured and unfolded proteins which accumulate in the periplasm following stress conditions. This chain is Probable periplasmic serine endoprotease DegP-like (mucD), found in Pseudomonas savastanoi pv. phaseolicola (strain 1448A / Race 6) (Pseudomonas syringae pv. phaseolicola (strain 1448A / Race 6)).